Here is a 186-residue protein sequence, read N- to C-terminus: UPF0303 protein ZMO1353 (186 aa).

This sequence belongs to the UPF0303 family.

This chain is UPF0303 protein ZMO1353, found in Zymomonas mobilis subsp. mobilis (strain ATCC 31821 / ZM4 / CP4).